Reading from the N-terminus, the 382-residue chain is MNTNKRVLILTANYGNGHVQVAKTLYEQCVRLGFQHVTVSNLYQESNPIVSEVTQYLYLKSFSIGKQFYRLFYYGVDKIYNKRKFNIYFKMGNKRLGELVDEHQPDIIINTFPMIVVPEYRRRTGRVIPTFNVMTDFCLHKIWVHENVDKYYVATDYVKEKLLEIGTHPSNVKITGIPIRPQFEESMPVGPIYKKYNLSPNKKVLLIMAGAHGVLKNVKELCENLVKDDQVQVVVVCGKNTALKESLSALEAENGDKLKVLGYVERIDELFRITDCMITKPGGITLTEATAIGVPVILYKPVPGQEKENANFFEDRGAAIVVNRHEEILESVTSLLADEDTLHRMKKNIKDLHLANSSEVILEDILKESEMMTAKQKAKVLS.

It belongs to the glycosyltransferase 28 family. UgtP subfamily.

It is found in the cell membrane. The catalysed reaction is a 1,2-diacyl-3-O-(beta-D-glucopyranosyl)-sn-glycerol + UDP-alpha-D-glucose = a 1,2-diacyl-3-O-(beta-D-Glc-(1-&gt;6)-beta-D-Glc)-sn-glycerol + UDP + H(+). It catalyses the reaction a 1,2-diacyl-3-O-(beta-D-Glc-(1-&gt;6)-beta-D-Glc)-sn-glycerol + UDP-alpha-D-glucose = a 1,2-diacyl-3-O-(beta-D-Glc-(1-&gt;6)-beta-D-Glc-(1-&gt;6)-beta-D-Glc)-sn-glycerol + UDP + H(+). It carries out the reaction a 1,2-diacyl-sn-glycerol + UDP-alpha-D-glucose = a 1,2-diacyl-3-O-(beta-D-glucopyranosyl)-sn-glycerol + UDP + H(+). The protein operates within glycolipid metabolism; diglucosyl-diacylglycerol biosynthesis. In terms of biological role, processive glucosyltransferase involved in the biosynthesis of both the bilayer- and non-bilayer-forming membrane glucolipids. Is able to successively transfer up to three glucosyl residues to diacylglycerol (DAG), thereby catalyzing the formation of beta-monoglucosyl-DAG (3-O-(beta-D-glucopyranosyl)-1,2-diacyl-sn-glycerol), beta-diglucosyl-DAG (3-O-(beta-D-glucopyranosyl-beta-(1-&gt;6)-D-glucopyranosyl)-1,2-diacyl-sn-glycerol) and beta-triglucosyl-DAG (3-O-(beta-D-glucopyranosyl-beta-(1-&gt;6)-D-glucopyranosyl-beta-(1-&gt;6)-D-glucopyranosyl)-1,2-diacyl-sn-glycerol). Beta-diglucosyl-DAG is the predominant glycolipid found in Bacillales and is also used as a membrane anchor for lipoteichoic acid (LTA). Also seems to be able to form beta-tetraglucosyl-DAG, although this glycolipid has not been found in B.subtilis membrane. UgtP can only use UDP-glucose as sugar donor. This is Processive diacylglycerol beta-glucosyltransferase from Bacillus subtilis (strain 168).